The chain runs to 353 residues: Inactive ADP-ribosyltransferase ARH2 (353 aa).

Position 27 is a phosphoserine (serine 27).

Belongs to the ADP-ribosylglycohydrolase family.

It is found in the cytoplasm. Its subcellular location is the myofibril. It localises to the sarcomere. Its function is as follows. Required for myofibril assembly and outgrowth of the cardiac chambers in the developing heart. Appears to be catalytically inactive, showing no activity against O-acetyl-ADP-ribose. The chain is Inactive ADP-ribosyltransferase ARH2 (Adprhl1) from Rattus norvegicus (Rat).